The chain runs to 374 residues: LIM domain-binding protein 1-A (374 aa).

3 disordered regions span residues 1-24, 249-297, and 322-374; these read MLDR…IGRH, PPAE…ALSS, and TRLE…QSSQ. Over residues 267-297 the composition is skewed to low complexity; the sequence is SGGSTMSSGGGNNNNSNSKKKSPASSFALSS. The LIM interaction domain (LID) domain occupies 299 to 338; sequence DVMVVGEPTLMGGEFGDEDERLITRLENTQFDAANGIDDE. A compositionally biased stretch (polar residues) spans 341-374; sequence FNSSPTMGTNSPWNSKAPSSQQGKNDNPSSQSSQ.

It belongs to the LDB family. Expressed ubiquitously in the embryo and adult.

The protein resides in the nucleus. In terms of biological role, binds to the LIM domain of a wide variety of LIM domain-containing transcription factors. The protein is LIM domain-binding protein 1-A (ldb1a) of Danio rerio (Zebrafish).